The primary structure comprises 337 residues: MSPSAPNTNELNSPVLETQPLAGDAALLHSSIAAGYEEIIRAPFDYLLNLPGKDVRSKMISAFNEWLCIPADKLEVIKRIVMLLHNASLLIDDIQDSSKLRRGLPVSHHIFGVPQTINAANYAYFLAQQELPKLGDPKAFEIYTEELLSLHRGQGMDIYWREASKCPTEEEYFSMVSHKTGGLFRLAIRLMQLASDKNWFVFHTRDFVPLVNVLGVIFQIRDDYLNLQSHAYTVNKGFGEDLTEGKYSFPIIHSIRSDPTNIQLSSILKQRTTDVDVKLFAVECIKATGSFEHCKEKIAELVAEARQLIKEMGNSVPGSAEAVDRVLDLIGLEPESS.

Residues lysine 53, arginine 56, and histidine 85 each contribute to the isopentenyl diphosphate site. Mg(2+) is bound by residues aspartate 92 and aspartate 96. Arginine 101 contacts dimethylallyl diphosphate. Arginine 102 lines the isopentenyl diphosphate pocket. Dimethylallyl diphosphate contacts are provided by lysine 179, threonine 180, and glutamine 219. Mg(2+) is bound at residue aspartate 222. 3 residues coordinate dimethylallyl diphosphate: asparagine 226, lysine 236, and lysine 246.

It belongs to the FPP/GGPP synthase family. Mg(2+) serves as cofactor.

It carries out the reaction isopentenyl diphosphate + dimethylallyl diphosphate = (2E)-geranyl diphosphate + diphosphate. The catalysed reaction is isopentenyl diphosphate + (2E)-geranyl diphosphate = (2E,6E)-farnesyl diphosphate + diphosphate. The enzyme catalyses isopentenyl diphosphate + (2E,6E)-farnesyl diphosphate = (2E,6E,10E)-geranylgeranyl diphosphate + diphosphate. It participates in secondary metabolite biosynthesis; terpenoid biosynthesis. Functionally, geranylgeranyl pyrophosphate synthase; part of the gene cluster that mediates the biosynthesis of the immunosuppressants subglutinols, meroterpenoids consisting of an alpha-pyrone (4-hydroxy-5,6-dimethyl-2-pyrone) moiety attached to a decalin core fused to a five-membered cyclic ether carrying a prenylside chain. The first step of the pathway is the synthesis of the alpha-pyrone moiety by the polyketide synthase subA via condensation of one acetyl-CoA starter unit with 3 malonyl-CoA units and 2 methylations. The alpha-pyrone is then combined with geranylgeranyl pyrophosphate (GGPP) formed by the GGPP synthase subD through the action of the prenyltransferase subC to yield a linear alpha-pyrone diterpenoid. Subsequent steps in the subglutinol biosynthetic pathway involve the decalin core formation, which is thought to be initiated by the epoxidation of the C10-C11 olefin by the FAD-dependent oxidoreductase subE. The following cyclization cascade would be catalyzed by the terpene cyclase subB. Lastly, the FAD-dependent dehydrogenase subF probably catalyzes the five-membered cyclic ether formation to complete the formation of subglutinol A. Subsequent redox reactions appear to give rise to subglutinol C and D, however, it remains unclear which enzymes are responsible for these transformations. SubD may have secondary function in the conversion of the identified subglutinols to subglutinol analog 45, which seems to be the major product of the cluster. The sequence is that of Geranylgeranyl pyrophosphate synthase subD from Metarhizium robertsii (strain ARSEF 23 / ATCC MYA-3075) (Metarhizium anisopliae (strain ARSEF 23)).